Reading from the N-terminus, the 445-residue chain is Gamma conglutin 2 (445 aa).

Residues 1–33 (MAQNMAPIFHFIAISLSCSFLFVLSSSQDSQSL) form the signal peptide. One can recognise a Peptidase A1 domain in the interval 60-425 (HWANIHKRTP…DFAKSRVEFN (366 aa)). 5 disulfide bridges follow: Cys-88/Cys-178, Cys-102/Cys-115, Cys-107/Cys-133, Cys-118/Cys-128, and Cys-346/Cys-387. N-linked (GlcNAc...) asparagine glycosylation is present at Asn-130.

The protein belongs to the peptidase A1 family. In terms of assembly, two-subunit monomeric unit made of alpha and beta subunits coupled by disulfide bonds (at pH 4.5 and under non-reducing conditions). Can also form oligomers including dimer, tetramer and cyclic hexamer (trimer of dimers) (at pH &gt; 5.5). Component of globulins complexes which accumulate in seeds. Interacts with flavonoids (e.g. apigenin glucosides) present in globulins complexes. In terms of processing, glycosylated on alpha chain.

The protein localises to the secreted. It is found in the extracellular space. Its function is as follows. Sulfur-rich seed storage protein that remains undegraded at germination. The chain is Gamma conglutin 2 from Lupinus angustifolius (Narrow-leaved blue lupine).